Reading from the N-terminus, the 191-residue chain is Transposon Tn1546 resolvase (191 aa).

The Resolvase/invertase-type recombinase catalytic domain maps to 2–138; it reads RKIGYIRVSS…EGIELAKKEG (137 aa). S10 acts as the O-(5'-phospho-DNA)-serine intermediate in catalysis. Positions 168–187 form a DNA-binding region, H-T-H motif; it reads VNQICEITNVSRASLYRKLS.

Belongs to the site-specific recombinase resolvase family.

Resolvase catalyzes the resolution (a site-specific recombination) of the cointegrated replicon to yield the final transposition products. This chain is Transposon Tn1546 resolvase, found in Enterococcus faecium (Streptococcus faecium).